The primary structure comprises 99 residues: Small ribosomal subunit protein eS24 (99 aa).

It belongs to the eukaryotic ribosomal protein eS24 family.

The sequence is that of Small ribosomal subunit protein eS24 from Pyrococcus horikoshii (strain ATCC 700860 / DSM 12428 / JCM 9974 / NBRC 100139 / OT-3).